The chain runs to 256 residues: NifU-like protein, mitochondrial (256 aa).

Positions 196 to 199 match the CxxC motif motif; sequence CTSC.

It belongs to the NifU family. In terms of assembly, homodimer; in absence of BOL3, probably bridged by an iron-sulfure cluster. Interacts with BOL3. Interacts with apo-target proteins, such as ACO1, LYS4, ACO2 and SDH2.

It localises to the mitochondrion matrix. Functionally, involved in iron homeostasis within the mitochondrion where it is involved in the assembly of iron-sulfur proteins. Together with BOL3, required during the last step of iron-sulfur protein assembly when the iron-sulfur cluster is inserted into the target protein. Required for protecting iron sulfur clusters from oxidative damage. The polypeptide is NifU-like protein, mitochondrial (NFU1) (Saccharomyces cerevisiae (strain ATCC 204508 / S288c) (Baker's yeast)).